A 65-amino-acid chain; its full sequence is Large ribosomal subunit protein uL30 (65 aa).

The protein belongs to the universal ribosomal protein uL30 family. Part of the 50S ribosomal subunit.

This is Large ribosomal subunit protein uL30 from Mesorhizobium japonicum (strain LMG 29417 / CECT 9101 / MAFF 303099) (Mesorhizobium loti (strain MAFF 303099)).